Consider the following 277-residue polypeptide: 2,3,4,5-tetrahydropyridine-2,6-dicarboxylate N-succinyltransferase (277 aa).

Arginine 106 and aspartate 143 together coordinate substrate.

This sequence belongs to the transferase hexapeptide repeat family. In terms of assembly, homotrimer.

The protein resides in the cytoplasm. It carries out the reaction (S)-2,3,4,5-tetrahydrodipicolinate + succinyl-CoA + H2O = (S)-2-succinylamino-6-oxoheptanedioate + CoA. Its pathway is amino-acid biosynthesis; L-lysine biosynthesis via DAP pathway; LL-2,6-diaminopimelate from (S)-tetrahydrodipicolinate (succinylase route): step 1/3. This Xylella fastidiosa (strain 9a5c) protein is 2,3,4,5-tetrahydropyridine-2,6-dicarboxylate N-succinyltransferase.